Reading from the N-terminus, the 612-residue chain is Glucoamylase (612 aa).

The N-terminal stretch at 1-19 (MVSFSSCLRALALGSSVLA) is a signal peptide. A propeptide spanning residues 20–25 (VQPVLR) is cleaved from the precursor. Residue Asn-39 is glycosylated (N-linked (GlcNAc...) asparagine). Trp-146 contacts substrate. The Proton acceptor role is filled by Asp-202. Residue Glu-205 is the Proton donor of the active site. 3 disulfides stabilise this stretch: Cys-236/Cys-239, Cys-248/Cys-475, and Cys-288/Cys-296. Positions 506 to 612 (CQVPTTVSVT…KSAVQSDVWR (107 aa)) constitute a CBM20 domain.

This sequence belongs to the glycosyl hydrolase 15 family.

It carries out the reaction Hydrolysis of terminal (1-&gt;4)-linked alpha-D-glucose residues successively from non-reducing ends of the chains with release of beta-D-glucose.. This chain is Glucoamylase (glaA), found in Aspergillus oryzae (strain ATCC 42149 / RIB 40) (Yellow koji mold).